Here is a 555-residue protein sequence, read N- to C-terminus: Dihydroxy-acid dehydratase (555 aa).

Asp-78 is a Mg(2+) binding site. Cys-119 serves as a coordination point for [2Fe-2S] cluster. Positions 120 and 121 each coordinate Mg(2+). At Lys-121 the chain carries N6-carboxylysine. Residue Cys-195 coordinates [2Fe-2S] cluster. Glu-444 serves as a coordination point for Mg(2+). The active-site Proton acceptor is the Ser-470.

The protein belongs to the IlvD/Edd family. Homodimer. [2Fe-2S] cluster serves as cofactor. It depends on Mg(2+) as a cofactor.

It catalyses the reaction (2R)-2,3-dihydroxy-3-methylbutanoate = 3-methyl-2-oxobutanoate + H2O. The enzyme catalyses (2R,3R)-2,3-dihydroxy-3-methylpentanoate = (S)-3-methyl-2-oxopentanoate + H2O. The protein operates within amino-acid biosynthesis; L-isoleucine biosynthesis; L-isoleucine from 2-oxobutanoate: step 3/4. Its pathway is amino-acid biosynthesis; L-valine biosynthesis; L-valine from pyruvate: step 3/4. Its function is as follows. Functions in the biosynthesis of branched-chain amino acids. Catalyzes the dehydration of (2R,3R)-2,3-dihydroxy-3-methylpentanoate (2,3-dihydroxy-3-methylvalerate) into 2-oxo-3-methylpentanoate (2-oxo-3-methylvalerate) and of (2R)-2,3-dihydroxy-3-methylbutanoate (2,3-dihydroxyisovalerate) into 2-oxo-3-methylbutanoate (2-oxoisovalerate), the penultimate precursor to L-isoleucine and L-valine, respectively. This is Dihydroxy-acid dehydratase from Dehalococcoides mccartyi (strain CBDB1).